Consider the following 452-residue polypeptide: tRNA modification GTPase MnmE (452 aa).

Arg24, Glu81, and Arg120 together coordinate (6S)-5-formyl-5,6,7,8-tetrahydrofolate. A TrmE-type G domain is found at 216–373; sequence GIKTVIVGAP…LFGAIGRWAD (158 aa). GTP-binding positions include 226-231, 245-251, and 270-273; these read NVGKSS, SAEPGTT, and DTAG. Ser230 and Thr251 together coordinate Mg(2+). Lys452 is a binding site for (6S)-5-formyl-5,6,7,8-tetrahydrofolate.

It belongs to the TRAFAC class TrmE-Era-EngA-EngB-Septin-like GTPase superfamily. TrmE GTPase family. In terms of assembly, homodimer. Heterotetramer of two MnmE and two MnmG subunits. K(+) is required as a cofactor.

It is found in the cytoplasm. In terms of biological role, exhibits a very high intrinsic GTPase hydrolysis rate. Involved in the addition of a carboxymethylaminomethyl (cmnm) group at the wobble position (U34) of certain tRNAs, forming tRNA-cmnm(5)s(2)U34. The sequence is that of tRNA modification GTPase MnmE from Opitutus terrae (strain DSM 11246 / JCM 15787 / PB90-1).